The chain runs to 440 residues: Histidinol dehydrogenase (440 aa).

NAD(+) contacts are provided by Tyr133, Gln194, and Asn217. Ser240, Gln262, and His265 together coordinate substrate. Residues Gln262 and His265 each contribute to the Zn(2+) site. Catalysis depends on proton acceptor residues Glu330 and His331. Substrate-binding residues include His331, Asp364, Glu418, and His423. Position 364 (Asp364) interacts with Zn(2+). His423 is a Zn(2+) binding site.

This sequence belongs to the histidinol dehydrogenase family. Requires Zn(2+) as cofactor.

The enzyme catalyses L-histidinol + 2 NAD(+) + H2O = L-histidine + 2 NADH + 3 H(+). Its pathway is amino-acid biosynthesis; L-histidine biosynthesis; L-histidine from 5-phospho-alpha-D-ribose 1-diphosphate: step 9/9. Functionally, catalyzes the sequential NAD-dependent oxidations of L-histidinol to L-histidinaldehyde and then to L-histidine. The polypeptide is Histidinol dehydrogenase (Nitrosospira multiformis (strain ATCC 25196 / NCIMB 11849 / C 71)).